A 211-amino-acid polypeptide reads, in one-letter code: Pyridoxine/pyridoxamine 5'-phosphate oxidase (211 aa).

Residues 7–10 (RREY) and K65 each bind substrate. FMN-binding positions include 60-65 (RIVLLK), 75-76 (YT), R81, K82, and Q104. Substrate contacts are provided by Y122, R126, and S130. FMN is bound by residues 139–140 (QS) and W184. Residue 190-192 (RLH) participates in substrate binding. R194 is a binding site for FMN.

Belongs to the pyridoxamine 5'-phosphate oxidase family. Homodimer. The cofactor is FMN.

It catalyses the reaction pyridoxamine 5'-phosphate + O2 + H2O = pyridoxal 5'-phosphate + H2O2 + NH4(+). It carries out the reaction pyridoxine 5'-phosphate + O2 = pyridoxal 5'-phosphate + H2O2. It participates in cofactor metabolism; pyridoxal 5'-phosphate salvage; pyridoxal 5'-phosphate from pyridoxamine 5'-phosphate: step 1/1. The protein operates within cofactor metabolism; pyridoxal 5'-phosphate salvage; pyridoxal 5'-phosphate from pyridoxine 5'-phosphate: step 1/1. Its function is as follows. Catalyzes the oxidation of either pyridoxine 5'-phosphate (PNP) or pyridoxamine 5'-phosphate (PMP) into pyridoxal 5'-phosphate (PLP). This chain is Pyridoxine/pyridoxamine 5'-phosphate oxidase, found in Vibrio cholerae serotype O1 (strain ATCC 39541 / Classical Ogawa 395 / O395).